The sequence spans 700 residues: Methionine--tRNA ligase (700 aa).

Residues 16–26 carry the 'HIGH' region motif; that stretch reads PYANGAFHVGH. Positions 148, 151, 161, and 164 each coordinate Zn(2+). Positions 337 to 341 match the 'KMSKS' region motif; the sequence is KMSKS. Lysine 340 is an ATP binding site. Positions 594-700 constitute a tRNA-binding domain; that stretch reads DFAKIDLRIA…PGAEPGMRVG (107 aa).

It belongs to the class-I aminoacyl-tRNA synthetase family. MetG type 1 subfamily. As to quaternary structure, homodimer. Requires Zn(2+) as cofactor.

It is found in the cytoplasm. It catalyses the reaction tRNA(Met) + L-methionine + ATP = L-methionyl-tRNA(Met) + AMP + diphosphate. Is required not only for elongation of protein synthesis but also for the initiation of all mRNA translation through initiator tRNA(fMet) aminoacylation. This chain is Methionine--tRNA ligase, found in Janthinobacterium sp. (strain Marseille) (Minibacterium massiliensis).